A 349-amino-acid polypeptide reads, in one-letter code: MRDRLLALAESARREIGGASELSAVEALRVRYLGKKGELSGVLGGMGKLPPDERRSLGEVANSVKAELEKLLAEAVERAEAAALEAQLQGPGLDVTLPGRGVALGSRHPVSRTMEEIVRTFSRLGFDVASGPEIELDYFNFEALNLPKDHPARDMQDTFYVDEATLGHAKKADSSALLRTHTSPVQVRYMLNRKPPIRAVMPGRVYRRDSDITHTPMFHQVEGLLVDKGVTFAELKGSLAAFVTAFFGSDTRTRFRPSFFPFTEPSAEVDITCTNCAGKGCRICKQTGWLEVLGSGMVHPNVFTSAGYDPNEVTGYAFGMGVERIAMLRYRIDDLRMMFENDARFLEQF.

Glu264 serves as a coordination point for Mg(2+).

The protein belongs to the class-II aminoacyl-tRNA synthetase family. Phe-tRNA synthetase alpha subunit type 1 subfamily. In terms of assembly, tetramer of two alpha and two beta subunits. Requires Mg(2+) as cofactor.

Its subcellular location is the cytoplasm. The enzyme catalyses tRNA(Phe) + L-phenylalanine + ATP = L-phenylalanyl-tRNA(Phe) + AMP + diphosphate + H(+). The protein is Phenylalanine--tRNA ligase alpha subunit of Myxococcus xanthus (strain DK1622).